The sequence spans 406 residues: Peptide antibiotic transporter SbmA (406 aa).

The Periplasmic segment spans residues 1–11; the sequence is MFKSFFPKPGT. Residues 12–32 form a helical membrane-spanning segment; sequence FFLSAFVWALIAVIFWQAGGG. Residues 33-56 lie on the Cytoplasmic side of the membrane; the sequence is DWVARITGASGQIPISAARFWSLD. A helical membrane pass occupies residues 57 to 77; sequence FLIFYAYYIVCVGLFALFWFI. Residues 78 to 87 are Periplasmic-facing; the sequence is YSPHRWQYWS. The chain crosses the membrane as a helical span at residues 88–108; the sequence is ILGTALIIFVTWFLVEVGVAV. Over 109 to 137 the chain is Cytoplasmic; the sequence is NAWYAPFYDLIQTALSSPHKVTIEQFYRE. Residues 138–158 form a helical membrane-spanning segment; it reads VGVFLGIALIAVVISVLNNFF. The Periplasmic portion of the chain corresponds to 159 to 205; it reads VSHYVFRWRTAMNEYYMANWQQLRHIEGAAQRVQEDTMRFASTLENM. The chain crosses the membrane as a helical span at residues 206–226; it reads GVSFINAIMTLIAFLPVLVTL. Over 227–242 the chain is Cytoplasmic; that stretch reads SAHVPELPIIGHIPYG. Residues 243–263 form a helical membrane-spanning segment; sequence LVIAAIVWSLMGTGLLAVVGI. Over 264–331 the chain is Periplasmic; sequence KLPGLEFKNQ…ARILYLQVDN (68 aa). The chain crosses the membrane as a helical span at residues 332 to 352; it reads VFGLFLLFPSIVAGTITLGLM. Over 353-406 the chain is Cytoplasmic; that stretch reads TQITNVFGQVRGAFQYLINSWTTLVELMSIYKRLRSFEHELDGDKIQEVTHTLS.

The protein belongs to the peptide uptake permease (PUP) (TC 9.A.18) family.

It is found in the cell inner membrane. In terms of biological role, uptake of antimicrobial peptides. In Escherichia coli O157:H7, this protein is Peptide antibiotic transporter SbmA (sbmA).